Consider the following 210-residue polypeptide: MASSSALALRRLLSSSTVAVPRALRAVRPVAASSRLFNTNAARNYEDGVDRNHHSNRHVSRHGGDFFSHILDPFTPTRSLSQMLNFMDQVSEIPLVSATRGMGASGVRRGWNVKEKDDALHLRIDMPGLSREDVKLALEQNTLVIRGEGETEEGEDVSGDGRRFTSRIELPEKVYKTDEIKAEMKNGVLKVVIPKIKEDERNNIRHINVD.

Residues 1 to 20 (MASSSALALRRLLSSSTVAV) constitute a mitochondrion transit peptide. Residues 102 to 210 (MGASGVRRGW…RNNIRHINVD (109 aa)) enclose the sHSP domain.

This sequence belongs to the small heat shock protein (HSP20) family. In terms of assembly, may form oligomeric structures.

The protein localises to the mitochondrion. The polypeptide is 23.5 kDa heat shock protein, mitochondrial (HSP23.5) (Arabidopsis thaliana (Mouse-ear cress)).